The following is a 308-amino-acid chain: Phosphoribosylaminoimidazole-succinocarboxamide synthase (308 aa).

Belongs to the SAICAR synthetase family.

It carries out the reaction 5-amino-1-(5-phospho-D-ribosyl)imidazole-4-carboxylate + L-aspartate + ATP = (2S)-2-[5-amino-1-(5-phospho-beta-D-ribosyl)imidazole-4-carboxamido]succinate + ADP + phosphate + 2 H(+). Its pathway is purine metabolism; IMP biosynthesis via de novo pathway; 5-amino-1-(5-phospho-D-ribosyl)imidazole-4-carboxamide from 5-amino-1-(5-phospho-D-ribosyl)imidazole-4-carboxylate: step 1/2. In Xanthomonas euvesicatoria pv. vesicatoria (strain 85-10) (Xanthomonas campestris pv. vesicatoria), this protein is Phosphoribosylaminoimidazole-succinocarboxamide synthase.